Consider the following 239-residue polypeptide: Phosphoribosylaminoimidazole-succinocarboxamide synthase (239 aa).

This sequence belongs to the SAICAR synthetase family.

It catalyses the reaction 5-amino-1-(5-phospho-D-ribosyl)imidazole-4-carboxylate + L-aspartate + ATP = (2S)-2-[5-amino-1-(5-phospho-beta-D-ribosyl)imidazole-4-carboxamido]succinate + ADP + phosphate + 2 H(+). It functions in the pathway purine metabolism; IMP biosynthesis via de novo pathway; 5-amino-1-(5-phospho-D-ribosyl)imidazole-4-carboxamide from 5-amino-1-(5-phospho-D-ribosyl)imidazole-4-carboxylate: step 1/2. The chain is Phosphoribosylaminoimidazole-succinocarboxamide synthase from Bacillus mycoides (strain KBAB4) (Bacillus weihenstephanensis).